The sequence spans 541 residues: Glucose-6-phosphate isomerase (541 aa).

Catalysis depends on glutamate 346, which acts as the Proton donor. Residues histidine 377 and lysine 506 contribute to the active site.

Belongs to the GPI family.

Its subcellular location is the cytoplasm. It carries out the reaction alpha-D-glucose 6-phosphate = beta-D-fructose 6-phosphate. It functions in the pathway carbohydrate biosynthesis; gluconeogenesis. The protein operates within carbohydrate degradation; glycolysis; D-glyceraldehyde 3-phosphate and glycerone phosphate from D-glucose: step 2/4. Its function is as follows. Catalyzes the reversible isomerization of glucose-6-phosphate to fructose-6-phosphate. This Rhizobium leguminosarum bv. trifolii (strain WSM2304) protein is Glucose-6-phosphate isomerase.